Reading from the N-terminus, the 382-residue chain is MNQDMELPEAYTSASNDFRSDTFTTPTREMIEAALTATIGDAVYQEDIDTLKLEQHVAKLAGMEAGMFCVSGTLSNQIALRTHLTQPPYSILCDYRAHVYTHEAAGLAILSQAMVTPVIPSNGNYLTLEDIKKHYIPDDGDIHGAPTKVISLENTLHGIIHPLEELVRIKAWCMENDLRLHCDGARIWNASAESGVPLKQYGELFDSISICLSKSMGAPMGSILVGSHKFIKKANHFRKQQGGGVRQSGMMCKMAMVAIQGDWKGKMRRSHRMAHELARFCAEHGIPLESPADTNFVFLDLQKSKMNPDVLVKKSLKYGCKLMGGRVSFHYQISEESLEKIKQAILEAFEYSKKNPYDENGPTKIYRSESADAVGEIKTYKY.

Position 214 is an N6-(pyridoxal phosphate)lysine (Lys214).

The protein belongs to the threonine aldolase family. In terms of assembly, homotetramer. The cofactor is pyridoxal 5'-phosphate.

It carries out the reaction L-threonine = acetaldehyde + glycine. The enzyme catalyses L-allo-threonine = acetaldehyde + glycine. Its pathway is amino-acid degradation; L-threonine degradation via aldolase pathway; acetaldehyde and glycine from L-threonine: step 1/1. The polypeptide is Low-specificity L-threonine aldolase (GLY1) (Eremothecium gossypii (strain ATCC 10895 / CBS 109.51 / FGSC 9923 / NRRL Y-1056) (Yeast)).